A 130-amino-acid chain; its full sequence is Ribosome-binding factor A (130 aa).

It belongs to the RbfA family. Monomer. Binds 30S ribosomal subunits, but not 50S ribosomal subunits or 70S ribosomes.

It is found in the cytoplasm. One of several proteins that assist in the late maturation steps of the functional core of the 30S ribosomal subunit. Associates with free 30S ribosomal subunits (but not with 30S subunits that are part of 70S ribosomes or polysomes). Required for efficient processing of 16S rRNA. May interact with the 5'-terminal helix region of 16S rRNA. This is Ribosome-binding factor A from Flavobacterium psychrophilum (strain ATCC 49511 / DSM 21280 / CIP 103535 / JIP02/86).